A 429-amino-acid chain; its full sequence is Histidine--tRNA ligase (429 aa).

The protein belongs to the class-II aminoacyl-tRNA synthetase family. Homodimer.

It is found in the cytoplasm. It carries out the reaction tRNA(His) + L-histidine + ATP = L-histidyl-tRNA(His) + AMP + diphosphate + H(+). The protein is Histidine--tRNA ligase of Oceanobacillus iheyensis (strain DSM 14371 / CIP 107618 / JCM 11309 / KCTC 3954 / HTE831).